We begin with the raw amino-acid sequence, 83 residues long: uncharacterized protein (83 aa).

2 helical membrane-spanning segments follow: residues 11 to 31 and 48 to 68; these read FYCI…SFLL and WHNL…HIWM.

Its subcellular location is the cell membrane. This is an uncharacterized protein from Bacillus subtilis (strain 168).